We begin with the raw amino-acid sequence, 626 residues long: Elongation factor 4 (626 aa).

The tr-type G domain maps to 14–195 (SVIRNFCIIA…QIVMDVPAPH (182 aa)). GTP-binding positions include 26-31 (DHGKST) and 142-145 (NKID). Residues 603–626 (LSTGEDSNDRDTKDKIRAAQKTEG) are disordered. A compositionally biased stretch (basic and acidic residues) spans 609 to 626 (SNDRDTKDKIRAAQKTEG).

It belongs to the TRAFAC class translation factor GTPase superfamily. Classic translation factor GTPase family. LepA subfamily.

It is found in the cell membrane. It catalyses the reaction GTP + H2O = GDP + phosphate + H(+). Functionally, required for accurate and efficient protein synthesis under certain stress conditions. May act as a fidelity factor of the translation reaction, by catalyzing a one-codon backward translocation of tRNAs on improperly translocated ribosomes. Back-translocation proceeds from a post-translocation (POST) complex to a pre-translocation (PRE) complex, thus giving elongation factor G a second chance to translocate the tRNAs correctly. Binds to ribosomes in a GTP-dependent manner. This Bifidobacterium longum (strain DJO10A) protein is Elongation factor 4.